Consider the following 362-residue polypeptide: 3-dehydroquinate synthase (362 aa).

NAD(+)-binding positions include 73-78 (DAEAGK), 107-111 (GAATD), 131-132 (TT), lysine 144, lysine 153, and 171-174 (TLQT). Glutamate 186, histidine 249, and histidine 265 together coordinate Zn(2+).

This sequence belongs to the sugar phosphate cyclases superfamily. Dehydroquinate synthase family. NAD(+) serves as cofactor. It depends on Co(2+) as a cofactor. Zn(2+) is required as a cofactor.

It is found in the cytoplasm. The enzyme catalyses 7-phospho-2-dehydro-3-deoxy-D-arabino-heptonate = 3-dehydroquinate + phosphate. The protein operates within metabolic intermediate biosynthesis; chorismate biosynthesis; chorismate from D-erythrose 4-phosphate and phosphoenolpyruvate: step 2/7. Catalyzes the conversion of 3-deoxy-D-arabino-heptulosonate 7-phosphate (DAHP) to dehydroquinate (DHQ). This Mycobacterium bovis (strain ATCC BAA-935 / AF2122/97) protein is 3-dehydroquinate synthase.